A 308-amino-acid chain; its full sequence is L-lactate dehydrogenase 2 (308 aa).

NAD(+) contacts are provided by residues Val-14, Asp-35, Tyr-65, and 79-80 (GA). Position 88 (Arg-88) interacts with substrate. An NAD(+)-binding site is contributed by Ser-101. Residue 120–123 (NPVD) coordinates substrate. Thr-143 is an NAD(+) binding site. Substrate is bound at residue 148–151 (DTAR). The Proton acceptor role is filled by His-175. Residue Thr-225 coordinates substrate.

It belongs to the LDH/MDH superfamily. LDH family. As to quaternary structure, homotetramer.

The protein localises to the cytoplasm. The catalysed reaction is (S)-lactate + NAD(+) = pyruvate + NADH + H(+). The protein operates within fermentation; pyruvate fermentation to lactate; (S)-lactate from pyruvate: step 1/1. Catalyzes the conversion of lactate to pyruvate. The polypeptide is L-lactate dehydrogenase 2 (Lactobacillus johnsonii (strain CNCM I-12250 / La1 / NCC 533)).